Here is a 380-residue protein sequence, read N- to C-terminus: Cytochrome b (380 aa).

The next 4 membrane-spanning stretches (helical) occupy residues 34–54 (FGSLLGICLMTQILTGLLLAM), 78–99 (WLIRNLHANGASFFFICIYFHI), 114–134 (WNTGVVLLLTLMATAFVGYVL), and 179–199 (FFALHFLLPFMIAGLTLIHLT). Heme b contacts are provided by H84 and H98. H183 and H197 together coordinate heme b. An a ubiquinone-binding site is contributed by H202. 4 helical membrane-spanning segments follow: residues 227 to 247 (LKDILGFTLMLLPLTTLALFS), 289 to 309 (LGGVLALAASVLILFLIPFLH), 321 to 341 (LSQLLFWVLVANLLILTWVGS), and 348 to 368 (FIIIGQLASLTYFAILLVLFP).

This sequence belongs to the cytochrome b family. In terms of assembly, the cytochrome bc1 complex contains 11 subunits: 3 respiratory subunits (MT-CYB, CYC1 and UQCRFS1), 2 core proteins (UQCRC1 and UQCRC2) and 6 low-molecular weight proteins (UQCRH/QCR6, UQCRB/QCR7, UQCRQ/QCR8, UQCR10/QCR9, UQCR11/QCR10 and a cleavage product of UQCRFS1). This cytochrome bc1 complex then forms a dimer. Heme b serves as cofactor.

It localises to the mitochondrion inner membrane. Its function is as follows. Component of the ubiquinol-cytochrome c reductase complex (complex III or cytochrome b-c1 complex) that is part of the mitochondrial respiratory chain. The b-c1 complex mediates electron transfer from ubiquinol to cytochrome c. Contributes to the generation of a proton gradient across the mitochondrial membrane that is then used for ATP synthesis. The polypeptide is Cytochrome b (MT-CYB) (Halobaena caerulea (Blue petrel)).